The following is a 644-amino-acid chain: Exoribonuclease 2 (644 aa).

The region spanning 189–516 is the RNB domain; sequence REDLTALDFV…NHRLLKAVIK (328 aa). In terms of domain architecture, S1 motif spans 561–643; it reads DTRFAAEIVD…ETRSIIARPV (83 aa).

This sequence belongs to the RNR ribonuclease family. RNase II subfamily.

It is found in the cytoplasm. The catalysed reaction is Exonucleolytic cleavage in the 3'- to 5'-direction to yield nucleoside 5'-phosphates.. Involved in mRNA degradation. Hydrolyzes single-stranded polyribonucleotides processively in the 3' to 5' direction. The sequence is that of Exoribonuclease 2 from Escherichia coli O17:K52:H18 (strain UMN026 / ExPEC).